The chain runs to 693 residues: Elongation factor G (693 aa).

The 275-residue stretch at 8 to 282 (EKTRNIGIMA…AVVDYLPSPL (275 aa)) folds into the tr-type G domain. Residues 17–24 (AHVDAGKT), 81–85 (DTPGH), and 135–138 (NKMD) each bind GTP.

This sequence belongs to the TRAFAC class translation factor GTPase superfamily. Classic translation factor GTPase family. EF-G/EF-2 subfamily.

It localises to the cytoplasm. In terms of biological role, catalyzes the GTP-dependent ribosomal translocation step during translation elongation. During this step, the ribosome changes from the pre-translocational (PRE) to the post-translocational (POST) state as the newly formed A-site-bound peptidyl-tRNA and P-site-bound deacylated tRNA move to the P and E sites, respectively. Catalyzes the coordinated movement of the two tRNA molecules, the mRNA and conformational changes in the ribosome. The chain is Elongation factor G from Streptococcus mutans serotype c (strain ATCC 700610 / UA159).